The following is a 298-amino-acid chain: ATP phosphoribosyltransferase (298 aa).

This sequence belongs to the ATP phosphoribosyltransferase family. Long subfamily. Mg(2+) serves as cofactor.

It localises to the cytoplasm. It catalyses the reaction 1-(5-phospho-beta-D-ribosyl)-ATP + diphosphate = 5-phospho-alpha-D-ribose 1-diphosphate + ATP. It participates in amino-acid biosynthesis; L-histidine biosynthesis; L-histidine from 5-phospho-alpha-D-ribose 1-diphosphate: step 1/9. With respect to regulation, feedback inhibited by histidine. In terms of biological role, catalyzes the condensation of ATP and 5-phosphoribose 1-diphosphate to form N'-(5'-phosphoribosyl)-ATP (PR-ATP). Has a crucial role in the pathway because the rate of histidine biosynthesis seems to be controlled primarily by regulation of HisG enzymatic activity. The sequence is that of ATP phosphoribosyltransferase from Vibrio parahaemolyticus serotype O3:K6 (strain RIMD 2210633).